The following is a 607-amino-acid chain: Bifunctional lysine-specific demethylase and histidyl-hydroxylase NO66 (607 aa).

2 disordered regions span residues 23–121 and 139–184; these read GPTI…IKTN and ATQH…GEVE. Residues 25–37 show a composition bias toward polar residues; it reads TIQQTGATKTPKT. Basic residues predominate over residues 39 to 58; sequence SKIRRLSIRKSTRKIKHALK. Positions 156–167 are enriched in basic and acidic residues; the sequence is DKTPVKRVRSDT. Positions 188–405 constitute a JmjC domain; it reads EEAEKMFEWL…DLMEKLVPAA (218 aa). Fe cation-binding residues include His-328, Asp-330, and His-371.

This sequence belongs to the ROX family. NO66 subfamily. It depends on Fe(2+) as a cofactor.

It is found in the nucleus. The catalysed reaction is L-histidyl-[protein] + 2-oxoglutarate + O2 = (3S)-3-hydroxy-L-histidyl-[protein] + succinate + CO2. The enzyme catalyses N(6),N(6)-dimethyl-L-lysyl(36)-[histone H3] + 2 2-oxoglutarate + 2 O2 = L-lysyl(36)-[histone H3] + 2 formaldehyde + 2 succinate + 2 CO2. In terms of biological role, oxygenase that can act as both a histone lysine demethylase and a ribosomal histidine hydroxylase. Specifically demethylates 'Lys-4' (H3K4me) and 'Lys-36' (H3K36me) of histone H3, thereby playing a central role in histone code. Also catalyzes the hydroxylation of 60S ribosomal protein L8. This is Bifunctional lysine-specific demethylase and histidyl-hydroxylase NO66 from Branchiostoma floridae (Florida lancelet).